The sequence spans 230 residues: Large ribosomal subunit protein uL1 (230 aa).

The protein belongs to the universal ribosomal protein uL1 family. As to quaternary structure, part of the 50S ribosomal subunit.

Binds directly to 23S rRNA. The L1 stalk is quite mobile in the ribosome, and is involved in E site tRNA release. Its function is as follows. Protein L1 is also a translational repressor protein, it controls the translation of the L11 operon by binding to its mRNA. The polypeptide is Large ribosomal subunit protein uL1 (Rubrobacter xylanophilus (strain DSM 9941 / JCM 11954 / NBRC 16129 / PRD-1)).